A 75-amino-acid chain; its full sequence is Protein SlyX homolog (75 aa).

This sequence belongs to the SlyX family.

The protein is Protein SlyX homolog of Vibrio campbellii (strain ATCC BAA-1116).